Here is a 330-residue protein sequence, read N- to C-terminus: Membrane-associated protein VIPP1, chloroplastic (330 aa).

Residues 1-64 (MALKASPVTG…LRLACDNRLR (64 aa)) constitute a chloroplast transit peptide. 2 coiled-coil regions span residues 124–259 (SQKQ…LTQI) and 312–329 (KDSEIENELNELRRKAND). The disordered stretch occupies residues 287–312 (LSGSSKKGELPPGRSTVAASTRYPFK).

It belongs to the PspA/Vipp/IM30 family. As to quaternary structure, homomultimer. Complex formation involves interaction via the central alpha-helical domain (71-286).

The protein localises to the plastid. It is found in the chloroplast inner membrane. The protein resides in the chloroplast thylakoid membrane. Required for plastid vesicle formation and thylakoid membrane biogenesis, but not for functional assembly of thylakoid protein complexes. The sequence is that of Membrane-associated protein VIPP1, chloroplastic from Arabidopsis thaliana (Mouse-ear cress).